A 250-amino-acid chain; its full sequence is DNA repair protein RecO (250 aa).

The protein belongs to the RecO family.

In terms of biological role, involved in DNA repair and RecF pathway recombination. This chain is DNA repair protein RecO, found in Rhodopseudomonas palustris (strain ATCC BAA-98 / CGA009).